The chain runs to 1165 residues: Adhesion G-protein coupled receptor G6 (1165 aa).

The signal sequence occupies residues 1–30; it reads MMFDTLGKRCCPWRLKPSALLFLFVLCVTC. Topologically, residues 31–832 are extracellular; that stretch reads VPLSVCGCGS…ASQIDGRNTK (802 aa). A disulfide bridge links Cys41 with Cys67. The 109-residue stretch at 41-149 folds into the CUB domain; the sequence is CRLVLSNPSG…KGFNASYIRV (109 aa). Glu89 and Asp97 together coordinate Ca(2+). Cys94 and Cys111 are oxidised to a cystine. Residue Asn121 is glycosylated (N-linked (GlcNAc...) asparagine). Residues Asp134, Ser136, and Ile137 each contribute to the Ca(2+) site. N-linked (GlcNAc...) asparagine glycosylation is present at Asn143. The Pentraxin (PTX) domain occupies 154-356; it reads RNQKVILPQT…ALKAEGNLSC (203 aa). 2 cysteine pairs are disulfide-bonded: Cys186–Cys254 and Cys231–Cys277. 11 N-linked (GlcNAc...) asparagine glycosylation sites follow: Asn258, Asn314, Asn324, Asn353, Asn370, Asn410, Asn417, Asn424, Asn458, Asn462, and Asn478. The mediates interaction with laminin-2 stretch occupies residues 446–807; the sequence is DKRLVLWALL…LDAGETICLC (362 aa). Cystine bridges form between Cys498–Cys533 and Cys521–Cys550. 10 N-linked (GlcNAc...) asparagine glycosylation sites follow: Asn536, Asn549, Asn563, Asn570, Asn665, Asn674, Asn720, Asn746, Asn781, and Asn788. Residues 640-823 form the GAIN-B domain; that stretch reads PHVNIETQNL…GVLMDLPRSA (184 aa). 2 cysteine pairs are disulfide-bonded: Cys773–Cys805 and Cys792–Cys807. A GPS region spans residues 773-823; it reads CAFWDMNKNKSFGGWNTSGCVAHSDLDAGETICLCSHFTHFGVLMDLPRSA. The stachel stretch occupies residues 812–820; sequence HFGVLMDLP. A helical membrane pass occupies residues 833-853; it reads VLTFITYIGCGISAIFSAATL. Topologically, residues 854 to 873 are cytoplasmic; it reads LTYVAFEKLRRDYPSKILMN. A helical transmembrane segment spans residues 874 to 894; it reads LSSALLFLNLIFLLDGWVTSF. Residues 895-899 are Extracellular-facing; that stretch reads GVAGL. The chain crosses the membrane as a helical span at residues 900–920; sequence CTAVAALLHFFLLATFTWMGL. Over 921-940 the chain is Cytoplasmic; it reads EAIHMYIALVKVFNTYIHRY. Residues 941-961 form a helical membrane-spanning segment; it reads ILKFCIIGWGLPALVVSIILV. Residues 962–994 are Extracellular-facing; it reads SRRQNEVYGKESYGKDQDDEFCWIQDPVVFYVS. A helical transmembrane segment spans residues 995–1015; that stretch reads CAGYFGVMFFLNVAMFIVVMV. The Cytoplasmic portion of the chain corresponds to 1016-1039; the sequence is QICGRNGKRSNRTLREEVLRNLRS. Residues 1040-1060 traverse the membrane as a helical segment; it reads VVSLTFLLGMTWGFAFFAWGP. At 1061-1062 the chain is on the extracellular side; that stretch reads LN. The helical transmembrane segment at 1063 to 1083 threads the bilayer; the sequence is IPFMYLFSIFNSLQGLFIFIF. Asn1073 is a 17alpha-hydroxyprogesterone binding site. Topologically, residues 1084–1165 are cytoplasmic; sequence HCAMKENVQK…KRNSHSDNFS (82 aa). The segment covering 1126–1154 has biased composition (low complexity); the sequence is NLGKSLSSSSIGSNSTYLTSKSKSSSTTY. The interval 1126–1165 is disordered; that stretch reads NLGKSLSSSSIGSNSTYLTSKSKSSSTTYFKRNSHSDNFS. Residues Ser1135 and Ser1138 each carry the phosphoserine modification.

Belongs to the G-protein coupled receptor 2 family. Adhesion G-protein coupled receptor (ADGR) subfamily. Heterodimer of 2 chains generated by proteolytic processing; the large extracellular N-terminal fragment and the membrane-bound C-terminal fragment predominantly remain associated and non-covalently linked. Interacts with Laminin-2; this interaction stabilizes the receptor in an inactive state. Laminin-2 polymerization could facilitate ADGRG6-NTF removal, thereby exposing the tethered agonist to drive myelination. Interacts with PRNP. Interacts with ITGB1. Interacts with LRP1. In terms of processing, proteolytically cleaved into 2 conserved sites: one in the GPS region of the GAIN-B domain (S1 site) and the other in the middle of the extracellular domain (S2 site). The proteolytic cleavage at S1 site generates an extracellular subunit and a seven-transmembrane subunit. Furin is involved in the cleavage of the S2 site generating a soluble fragment. Processing at the GPS region occurred independent of and probably prior to the cleavage at the S2 site. Proteolytic cleavage is required for activation of the receptor. As to expression, expressed at high levels in the heart, somite and otic vesicle during embryogenesis and in adult lung.

It localises to the cell membrane. With respect to regulation, forms a heterodimer of 2 chains generated by proteolytic processing that remain associated through non-covalent interactions mediated by the GAIN-B domain. In the inactivated receptor, the Stachel sequence (also named stalk) is embedded in the GAIN-B domain, where it adopts a beta-strand conformation. On activation, the Stachel moves into the 7 transmembrane region and adopts a twisted hook-shaped configuration that forms contacts within the receptor, leading to coupling of a G-alpha protein, which activates signaling. The cleaved GAIN-B and N-terminal domains can then dissociate from the rest of the receptor. Adhesion G-protein coupled receptor (aGPCR) for steroid hormones, such as progesterone and 17alpha-hydroxyprogesterone (17OHP). Involved in many biological processes, such as myelination, sprouting angiogenesis, placenta, ear and cartilage development. Ligand binding causes a conformation change that triggers signaling via guanine nucleotide-binding proteins (G proteins) and modulates the activity of downstream effectors, such as adenylate cyclase. ADGRG6 is coupled to G(i) G alpha proteins and mediates inhibition of adenylate cyclase. Also able to couple to G(q) G proteins. Involved in myelination of the peripheral nervous system: required for differentiation of promyelinating Schwann cells and for normal myelination of axons. Also acts as a regulator of body length and bone mass. Acts as a regulator of blood-brain barrier formation in the central nervous system vie its association with LRP1 and ITGB1. This is Adhesion G-protein coupled receptor G6 from Mus musculus (Mouse).